The following is a 166-amino-acid chain: Endoribonuclease YbeY (166 aa).

Residues histidine 132, histidine 136, and histidine 142 each contribute to the Zn(2+) site.

This sequence belongs to the endoribonuclease YbeY family. Zn(2+) is required as a cofactor.

It localises to the cytoplasm. Single strand-specific metallo-endoribonuclease involved in late-stage 70S ribosome quality control and in maturation of the 3' terminus of the 16S rRNA. This chain is Endoribonuclease YbeY, found in Clostridium botulinum (strain Kyoto / Type A2).